The chain runs to 442 residues: D-serine dehydratase (442 aa).

An N6-(pyridoxal phosphate)lysine modification is found at lysine 118.

The protein belongs to the serine/threonine dehydratase family. DsdA subfamily. As to quaternary structure, monomer. Requires pyridoxal 5'-phosphate as cofactor.

The enzyme catalyses D-serine = pyruvate + NH4(+). The sequence is that of D-serine dehydratase from Shigella sonnei (strain Ss046).